A 359-amino-acid chain; its full sequence is Dihydroorotate dehydrogenase (quinone) (359 aa).

FMN contacts are provided by residues A68–K72 and T92. A substrate-binding site is contributed by K72. N117–F121 lines the substrate pocket. Residues N145 and N176 each coordinate FMN. Residue N176 coordinates substrate. S179 functions as the Nucleophile in the catalytic mechanism. N181 contacts substrate. 2 residues coordinate FMN: K212 and T240. N241 to T242 contributes to the substrate binding site. Residues G266, G295, and Y316–T317 each bind FMN.

This sequence belongs to the dihydroorotate dehydrogenase family. Type 2 subfamily. In terms of assembly, monomer. Requires FMN as cofactor.

Its subcellular location is the cell membrane. It carries out the reaction (S)-dihydroorotate + a quinone = orotate + a quinol. It participates in pyrimidine metabolism; UMP biosynthesis via de novo pathway; orotate from (S)-dihydroorotate (quinone route): step 1/1. Functionally, catalyzes the conversion of dihydroorotate to orotate with quinone as electron acceptor. The polypeptide is Dihydroorotate dehydrogenase (quinone) (Corynebacterium striatum).